A 263-amino-acid polypeptide reads, in one-letter code: Lens fiber major intrinsic protein (263 aa).

Topologically, residues 1–9 (MWELRSASF) are cytoplasmic. A helical membrane pass occupies residues 10–29 (WRAIFAEFFATLFYVFFGLG). Over 30–41 (SSLRWAPGPLHV) the chain is Extracellular. The helical transmembrane segment at 42–59 (LQVALAFGLALATLVQTV) threads the bilayer. Residues 60-61 (GH) lie on the Cytoplasmic side of the membrane. The segment at residues 62 to 77 (ISGAHVNPAVTFAFLV) is an intramembrane region (discontinuously helical). An NPA 1 motif is present at residues 68-70 (NPA). Residues 78–82 (GSQMS) lie on the Cytoplasmic side of the membrane. Residues 83–106 (LLRAFCYIAAQLLGAVAGAAVLYS) form a helical membrane-spanning segment. Topologically, residues 107 to 127 (VTPPAVRGNLALNTLHAGVSV) are extracellular. The chain crosses the membrane as a helical span at residues 128 to 148 (GQATTVEIFLTLQFVLCIFAT). The Cytoplasmic segment spans residues 149–156 (YDERRNGR). A helical transmembrane segment spans residues 157-175 (MGSVALAVGFSLTLGHLFG). Residues 176–178 (MYY) lie on the Extracellular side of the membrane. An intramembrane region (discontinuously helical) is located at residues 179-193 (TGAGMNPARSFAPAI). The NPA 2 motif lies at 184 to 186 (NPA). At 194–200 (LTRNFSN) the chain is on the extracellular side. A helical transmembrane segment spans residues 201 to 222 (HWVYWVGPIIGGGLGSLLYDFL). The Cytoplasmic portion of the chain corresponds to 223-263 (LFPRLKSVSERLSILKGARPSDSNGQPEGTGEPVELKTQAL). Residues 227 to 237 (LKSVSERLSIL) form an interaction with CALM region. Phosphoserine is present on residues Ser-235, Ser-243, and Ser-245. The segment at 240-263 (ARPSDSNGQPEGTGEPVELKTQAL) is disordered. A Deamidated asparagine modification is found at Asn-246.

This sequence belongs to the MIP/aquaporin (TC 1.A.8) family. As to quaternary structure, homotetramer; each monomer provides an independent water pore. Two homotetramers on opposing membranes can dimerize, forming a cell-cell junction. Interacts with CALM; the calcium-calmodulin/CALM complex interacts with the cytoplasmic domains of two aquaporins, leading to channel closure. Interacts with BFSP1 (via C-terminus); prevents calcium-dependent inhibition of the water channel activity. Post-translationally, subject to partial proteolytic cleavage in the eye lens core. Partial proteolysis promotes interactions between tetramers from adjoining membranes. Fatty acylated at Met-1 and Lys-238. The acyl modifications, in decreasing order of ion abundance, are: oleoyl (C18:1) &gt; palmitoyl (C16:0) &gt; stearoyl (C18:0) &gt; eicosenoyl (C20:1) &gt; dihomo-gamma-linolenoyl (C20:3) &gt; palmitoleoyl (C16:1) &gt; eicosadienoyl (C20:2).

It localises to the cell membrane. The protein resides in the cell junction. The enzyme catalyses H2O(in) = H2O(out). The water channel activity is inhibited by calcium through calmodulin/CALM. Aquaporins form homotetrameric transmembrane channels, with each monomer independently mediating water transport across the plasma membrane along its osmotic gradient. Specifically expressed in lens fiber cells, this aquaporin is crucial for maintaining lens water homeostasis and transparency. Beyond water permeability, it also acts as a cell-to-cell adhesion molecule, forming thin junctions between lens fiber cells that are essential for maintaining the ordered structure and transparency of the lens. This Rattus norvegicus (Rat) protein is Lens fiber major intrinsic protein.